A 182-amino-acid polypeptide reads, in one-letter code: ATP-dependent protease subunit HslV (182 aa).

The active site involves threonine 10. 3 residues coordinate Na(+): alanine 166, cysteine 169, and serine 172.

It belongs to the peptidase T1B family. HslV subfamily. As to quaternary structure, a double ring-shaped homohexamer of HslV is capped on each side by a ring-shaped HslU homohexamer. The assembly of the HslU/HslV complex is dependent on binding of ATP.

It is found in the cytoplasm. It carries out the reaction ATP-dependent cleavage of peptide bonds with broad specificity.. With respect to regulation, allosterically activated by HslU binding. Its function is as follows. Protease subunit of a proteasome-like degradation complex believed to be a general protein degrading machinery. The chain is ATP-dependent protease subunit HslV from Rickettsia peacockii (strain Rustic).